The chain runs to 214 residues: Thiamine-phosphate synthase (214 aa).

4-amino-2-methyl-5-(diphosphooxymethyl)pyrimidine-binding positions include 38–42 (QLREK) and Asn-70. Mg(2+) is bound by residues Asp-71 and Asp-90. Positions 109 and 138 each coordinate 4-amino-2-methyl-5-(diphosphooxymethyl)pyrimidine. Gly-165 lines the 2-[(2R,5Z)-2-carboxy-4-methylthiazol-5(2H)-ylidene]ethyl phosphate pocket.

This sequence belongs to the thiamine-phosphate synthase family. The cofactor is Mg(2+).

The enzyme catalyses 2-[(2R,5Z)-2-carboxy-4-methylthiazol-5(2H)-ylidene]ethyl phosphate + 4-amino-2-methyl-5-(diphosphooxymethyl)pyrimidine + 2 H(+) = thiamine phosphate + CO2 + diphosphate. It catalyses the reaction 2-(2-carboxy-4-methylthiazol-5-yl)ethyl phosphate + 4-amino-2-methyl-5-(diphosphooxymethyl)pyrimidine + 2 H(+) = thiamine phosphate + CO2 + diphosphate. The catalysed reaction is 4-methyl-5-(2-phosphooxyethyl)-thiazole + 4-amino-2-methyl-5-(diphosphooxymethyl)pyrimidine + H(+) = thiamine phosphate + diphosphate. The protein operates within cofactor biosynthesis; thiamine diphosphate biosynthesis; thiamine phosphate from 4-amino-2-methyl-5-diphosphomethylpyrimidine and 4-methyl-5-(2-phosphoethyl)-thiazole: step 1/1. Functionally, condenses 4-methyl-5-(beta-hydroxyethyl)thiazole monophosphate (THZ-P) and 2-methyl-4-amino-5-hydroxymethyl pyrimidine pyrophosphate (HMP-PP) to form thiamine monophosphate (TMP). This Caldanaerobacter subterraneus subsp. tengcongensis (strain DSM 15242 / JCM 11007 / NBRC 100824 / MB4) (Thermoanaerobacter tengcongensis) protein is Thiamine-phosphate synthase.